The sequence spans 478 residues: Probable cytosolic Fe-S cluster assembly factor CPIJ010948 (478 aa).

[4Fe-4S] cluster is bound by residues cysteine 23, cysteine 69, cysteine 72, cysteine 75, cysteine 189, cysteine 245, cysteine 396, and cysteine 400.

It belongs to the NARF family.

Functionally, component of the cytosolic iron-sulfur (Fe/S) protein assembly machinery. Required for maturation of extramitochondrial Fe/S proteins. This Culex quinquefasciatus (Southern house mosquito) protein is Probable cytosolic Fe-S cluster assembly factor CPIJ010948.